We begin with the raw amino-acid sequence, 190 residues long: Imidazoleglycerol-phosphate dehydratase (190 aa).

This sequence belongs to the imidazoleglycerol-phosphate dehydratase family.

Its subcellular location is the cytoplasm. The enzyme catalyses D-erythro-1-(imidazol-4-yl)glycerol 3-phosphate = 3-(imidazol-4-yl)-2-oxopropyl phosphate + H2O. Its pathway is amino-acid biosynthesis; L-histidine biosynthesis; L-histidine from 5-phospho-alpha-D-ribose 1-diphosphate: step 6/9. The sequence is that of Imidazoleglycerol-phosphate dehydratase from Campylobacter hominis (strain ATCC BAA-381 / DSM 21671 / CCUG 45161 / LMG 19568 / NCTC 13146 / CH001A).